The following is a 155-amino-acid chain: Lectin-like protein EP153R (155 aa).

The Cytoplasmic portion of the chain corresponds to 1 to 30 (MYFKKKYIGLIDKNCEKKILDDCTTIKICY). Residues 31–51 (ILIGILIGTNMITLIYNFIFW) traverse the membrane as a helical segment. The Extracellular segment spans residues 52 to 155 (DHYMTCNKKD…YLPLLFICSK (104 aa)). A disulfide bridge connects residues C66 and C77. Residues 66 to 154 (CPKDWVGYNN…KYLPLLFICS (89 aa)) form a lectin-like region. 8 N-linked (GlcNAc...) asparagine; by host glycosylation sites follow: N82, N86, N98, N104, N110, N124, N130, and N137. A disulfide bridge connects residues C94 and C153.

This sequence belongs to the asfivirus lectin-like protein family. As to quaternary structure, homodimer.

Its subcellular location is the host endoplasmic reticulum membrane. Functionally, down-regulates MHC-I expression by impairing the appropriate configuration or presentation into the plasma membrane of the latter. Participates in viral hemadsorption, which may help viral spread. Reduces the transactivating activity of host TP53, thus inhibiting apoptosis. Non-essential for virus growth in swine macrophage cell cultures. In Ornithodoros (relapsing fever ticks), this protein is Lectin-like protein EP153R.